The following is a 156-amino-acid chain: Small ribosomal subunit protein uS7 (156 aa).

In terms of assembly, part of the 30S ribosomal subunit. Contacts proteins S9 and S11. Binds to the C-terminus of IF3 and to the C-terminus of Era.

One of the primary rRNA binding proteins, it binds directly to 3'-end of the 16S rRNA where it nucleates assembly of the head domain of the 30S subunit. Is located at the subunit interface close to the decoding center. Binds mRNA and the E site tRNA blocking its exit path in the ribosome. This blockage implies that this section of the ribosome must be able to move to release the deacetylated tRNA. The chain is Small ribosomal subunit protein uS7 (rpsG) from Thermus thermophilus (strain ATCC 27634 / DSM 579 / HB8).